Here is a 489-residue protein sequence, read N- to C-terminus: NAC domain-containing protein 74 (489 aa).

One can recognise an NAC domain in the interval Leu9–Arg159. Residues Ile108–Gly165 mediate DNA binding. Basic and acidic residues predominate over residues Lys413 to Ala427. The disordered stretch occupies residues Lys413–Ser435. Residues Trp456–Gly476 form a helical membrane-spanning segment.

Widely expressed.

It localises to the nucleus. Its subcellular location is the cell membrane. Functionally, transcription activator involved in heat and endoplasmic reticulum (ER) stress responses. Regulates the expression of genes involved in ER protein folding and heat stress-responsive genes. Binds directly to the promoter of BZIP74 and regulates its expression in response to heat stress. The chain is NAC domain-containing protein 74 from Oryza sativa subsp. japonica (Rice).